The chain runs to 345 residues: Cytoskeleton protein RodZ (345 aa).

The Cytoplasmic segment spans residues 1 to 111 (MNTEASQDQT…LGKKHKKRDG (111 aa)). The HTH cro/C1-type domain occupies 19–79 (LRQARESLGL…KLVHLPEDEL (61 aa)). Positions 30-49 (QQTVAERLCLKVSTIRDIEE) form a DNA-binding region, H-T-H motif. The chain crosses the membrane as a helical; Signal-anchor for type II membrane protein span at residues 112–132 (WLMSFTWLIVLVVLGLTGAWW). The Periplasmic portion of the chain corresponds to 133–345 (WQNHQAQQAE…RVARLTVCVE (213 aa)). The disordered stretch occupies residues 151-259 (SAQLSQNGGQ…PLPTADAGVS (109 aa)). Residues 188–225 (PLTNHSGSAITNSATTSSVPKTTSTEPVDTANTNTTMH) are compositionally biased toward polar residues. Residues 229-241 (AASAAVSPSQVPQ) show a composition bias toward low complexity.

Belongs to the RodZ family.

The protein localises to the cell inner membrane. Its function is as follows. Cytoskeletal protein that is involved in cell-shape control through regulation of the length of the long axis. This is Cytoskeleton protein RodZ from Yersinia pestis bv. Antiqua (strain Antiqua).